We begin with the raw amino-acid sequence, 99 residues long: Leydig cell tumor 10 kDa protein homolog (99 aa).

Residues 1 to 36 (MAQGQRKFQAHKPAKSKTAAAASEKNRGPRKGGRVI) are disordered.

This sequence belongs to the UPF0390 family.

In terms of biological role, may have a potential role in hypercalcemia of malignancy. This is Leydig cell tumor 10 kDa protein homolog (C19orf53) from Homo sapiens (Human).